Consider the following 428-residue polypeptide: Serine--tRNA ligase (428 aa).

235 to 237 is an L-serine binding site; sequence TAE. Residue 266-268 participates in ATP binding; the sequence is RSE. Glutamate 289 provides a ligand contact to L-serine. Position 353–356 (353–356) interacts with ATP; sequence EISS. Serine 389 lines the L-serine pocket.

The protein belongs to the class-II aminoacyl-tRNA synthetase family. Type-1 seryl-tRNA synthetase subfamily. Homodimer. The tRNA molecule binds across the dimer.

It is found in the cytoplasm. The enzyme catalyses tRNA(Ser) + L-serine + ATP = L-seryl-tRNA(Ser) + AMP + diphosphate + H(+). It carries out the reaction tRNA(Sec) + L-serine + ATP = L-seryl-tRNA(Sec) + AMP + diphosphate + H(+). It participates in aminoacyl-tRNA biosynthesis; selenocysteinyl-tRNA(Sec) biosynthesis; L-seryl-tRNA(Sec) from L-serine and tRNA(Sec): step 1/1. Functionally, catalyzes the attachment of serine to tRNA(Ser). Is also able to aminoacylate tRNA(Sec) with serine, to form the misacylated tRNA L-seryl-tRNA(Sec), which will be further converted into selenocysteinyl-tRNA(Sec). This is Serine--tRNA ligase from Shewanella sp. (strain W3-18-1).